The chain runs to 202 residues: Peptide deformylase (202 aa).

The disordered stretch occupies residues 1 to 24; that stretch reads MAGSFAQLAKNAEKKKPSISVSKE. Fe cation is bound by residues Cys121 and His163. The active site involves Glu164. His167 is a Fe cation binding site.

It belongs to the polypeptide deformylase family. Fe(2+) is required as a cofactor.

It catalyses the reaction N-terminal N-formyl-L-methionyl-[peptide] + H2O = N-terminal L-methionyl-[peptide] + formate. Removes the formyl group from the N-terminal Met of newly synthesized proteins. Requires at least a dipeptide for an efficient rate of reaction. N-terminal L-methionine is a prerequisite for activity but the enzyme has broad specificity at other positions. The sequence is that of Peptide deformylase from Prochlorococcus marinus (strain NATL1A).